We begin with the raw amino-acid sequence, 444 residues long: Proline--tRNA ligase (444 aa).

It belongs to the class-II aminoacyl-tRNA synthetase family. ProS type 2 subfamily. In terms of assembly, homodimer.

The protein resides in the cytoplasm. The enzyme catalyses tRNA(Pro) + L-proline + ATP = L-prolyl-tRNA(Pro) + AMP + diphosphate. In terms of biological role, catalyzes the attachment of proline to tRNA(Pro) in a two-step reaction: proline is first activated by ATP to form Pro-AMP and then transferred to the acceptor end of tRNA(Pro). This chain is Proline--tRNA ligase, found in Bradyrhizobium sp. (strain BTAi1 / ATCC BAA-1182).